Reading from the N-terminus, the 398-residue chain is 1-deoxy-D-xylulose 5-phosphate reductoisomerase (398 aa).

NADPH is bound by residues Thr-10, Gly-11, Ser-12, Ile-13, and Asn-124. Position 125 (Lys-125) interacts with 1-deoxy-D-xylulose 5-phosphate. NADPH is bound at residue Glu-126. A Mn(2+)-binding site is contributed by Asp-150. 1-deoxy-D-xylulose 5-phosphate-binding residues include Ser-151, Glu-152, Ser-186, and His-209. Glu-152 is a Mn(2+) binding site. Residue Gly-215 coordinates NADPH. 1-deoxy-D-xylulose 5-phosphate is bound by residues Ser-222, Asn-227, Lys-228, and Glu-231. Glu-231 is a binding site for Mn(2+).

It belongs to the DXR family. Mg(2+) is required as a cofactor. It depends on Mn(2+) as a cofactor.

It carries out the reaction 2-C-methyl-D-erythritol 4-phosphate + NADP(+) = 1-deoxy-D-xylulose 5-phosphate + NADPH + H(+). Its pathway is isoprenoid biosynthesis; isopentenyl diphosphate biosynthesis via DXP pathway; isopentenyl diphosphate from 1-deoxy-D-xylulose 5-phosphate: step 1/6. Its function is as follows. Catalyzes the NADPH-dependent rearrangement and reduction of 1-deoxy-D-xylulose-5-phosphate (DXP) to 2-C-methyl-D-erythritol 4-phosphate (MEP). The protein is 1-deoxy-D-xylulose 5-phosphate reductoisomerase of Tolumonas auensis (strain DSM 9187 / NBRC 110442 / TA 4).